Here is a 64-residue protein sequence, read N- to C-terminus: Antimicrobial peptide THP2 (64 aa).

Positions 1 to 28 (MRILYLLFSLLFLALQVSPGLSSPKRDM) are cleaved as a signal peptide. 3 cysteine pairs are disulfide-bonded: Cys31-Cys57, Cys36-Cys51, and Cys41-Cys58.

In terms of tissue distribution, expressed in circulating heterophil granulocytes and bone marrow (at protein level).

It localises to the secreted. Functionally, antibacterial activity against the Gram-positive bacterium Staphylococcus aureus. Lacks antibacterial activity against the Gram-negative bacterium E.coli K-12. This chain is Antimicrobial peptide THP2, found in Meleagris gallopavo (Wild turkey).